The sequence spans 680 residues: Probable ATP-dependent RNA helicase pitchoune (680 aa).

The tract at residues 1–168 is disordered; it reads MSIREKLLMK…GKPAKDDEPF (168 aa). Residues 29 to 42 are compositionally biased toward polar residues; the sequence is KNAQKQEPPKQNGN. Over residues 59 to 69 the composition is skewed to acidic residues; sequence DEDDDLEEDFQ. Positions 74–83 are enriched in basic residues; it reads PKKKQQKQPP. A compositionally biased stretch (acidic residues) spans 95–141; sequence SESDDDEQEDEADEDSDLDEVAEVDEEDVDSGSEDDDQQEDEDEEEP. The Q motif signature appears at 187 to 215; it reads FASLKGAVSEATLRAIKEMGFTEMTEIQS. One can recognise a Helicase ATP-binding domain in the interval 218-393; that stretch reads LTPLLKGRDL…KLALKSEPIY (176 aa). An ATP-binding site is contributed by 231 to 238; the sequence is AQTGSGKT. A DEVD box motif is present at residues 341–344; that stretch reads DEVD. In terms of domain architecture, Helicase C-terminal spans 407–577; that stretch reads GLEQGYIVCP…DIQLQLEKLI (171 aa). Positions 659-680 are disordered; that stretch reads GSASKQRHFKQVNRDQAKKFMR. Residues 670–680 show a composition bias toward basic and acidic residues; sequence VNRDQAKKFMR.

The protein belongs to the DEAD box helicase family. DDX18/HAS1 subfamily.

The protein localises to the nucleus. It is found in the nucleolus. The catalysed reaction is ATP + H2O = ADP + phosphate + H(+). Its function is as follows. Probable RNA-dependent helicase. Functions in cell growth and proliferation. May have a role in ribosome biogenesis and, consequently, in protein biosynthesis. The polypeptide is Probable ATP-dependent RNA helicase pitchoune (pit) (Drosophila melanogaster (Fruit fly)).